The sequence spans 497 residues: MITSSQSALSGEMLMAMLPILIVAGTVVLLMLSIAWRRHHFFNGSLTVIGLNCALFSLYTVWGLFHFSQHDAINVTPLLRINGYSIFYSGLVILASLATCTFAYPWLQGYPDNREEFYLLLLISTLGALVLVSAQHLAAVFLGIELIALPLFGLLGYAYQQNRSLEASIKYFVLSAAASSFLLFGMAMLYAQTGGLSFTSLGNVFNEHVFSKPLILAGMGMILVGFGFKLSLVPFQLWTPDVYQGAPAPVTTFLGTVGKIALLAGVMRFFLYVPTFNVPGLNTALSFMAVASIFFGNLMALTQNNIKRLLGYSSIAHFGYLMIGLIALHQDPMVLERVAVYIVAYLFSSLGVLGVVSLMSSPYKGADAEALFSYRGLFWHRPILAAVMTIMLLSLAGIPMTLGFIAKFFLLLTAVNTHLWVLTATVVIGSAIALYYYLRITVSLFLSPPETLQRDTPKDWAFTAGGIVVWISALLVLVFGIYPQPLISFIKGFNALS.

14 helical membrane-spanning segments follow: residues 14 to 34, 45 to 65, 86 to 106, 116 to 136, 137 to 157, 171 to 191, 215 to 235, 253 to 273, 281 to 301, 309 to 329, 338 to 358, 385 to 405, 420 to 439, and 461 to 481; these read LMAM…MLSI, SLTV…WGLF, IFYS…AYPW, EFYL…SAQH, LAAV…LLGY, YFVL…MLYA, ILAG…LVPF, FLGT…FLYV, LNTA…LMAL, LLGY…IALH, VAVY…VVSL, AAVM…LGFI, WVLT…YYLR, and AFTA…VFGI.

It belongs to the complex I subunit 2 family. As to quaternary structure, NDH-1 is composed of 13 different subunits. Subunits NuoA, H, J, K, L, M, N constitute the membrane sector of the complex.

It localises to the cell membrane. The catalysed reaction is a quinone + NADH + 5 H(+)(in) = a quinol + NAD(+) + 4 H(+)(out). NDH-1 shuttles electrons from NADH, via FMN and iron-sulfur (Fe-S) centers, to quinones in the respiratory chain. The immediate electron acceptor for the enzyme in this species is believed to be ubiquinone. Couples the redox reaction to proton translocation (for every two electrons transferred, four hydrogen ions are translocated across the cytoplasmic membrane), and thus conserves the redox energy in a proton gradient. This is NADH-quinone oxidoreductase subunit N from Hamiltonella defensa subsp. Acyrthosiphon pisum (strain 5AT).